The chain runs to 243 residues: Tryptophan synthase alpha chain (243 aa).

Catalysis depends on proton acceptor residues Glu32 and Asp43.

The protein belongs to the TrpA family. In terms of assembly, tetramer of two alpha and two beta chains.

The protein resides in the plastid. It localises to the chloroplast. The enzyme catalyses (1S,2R)-1-C-(indol-3-yl)glycerol 3-phosphate + L-serine = D-glyceraldehyde 3-phosphate + L-tryptophan + H2O. The protein operates within amino-acid biosynthesis; L-tryptophan biosynthesis; L-tryptophan from chorismate: step 5/5. In terms of biological role, the alpha subunit is responsible for the aldol cleavage of indoleglycerol phosphate to indole and glyceraldehyde 3-phosphate. This Cyanidioschyzon merolae (strain NIES-3377 / 10D) (Unicellular red alga) protein is Tryptophan synthase alpha chain.